The primary structure comprises 509 residues: Maturase K (509 aa).

It belongs to the intron maturase 2 family. MatK subfamily.

It is found in the plastid. Its subcellular location is the chloroplast. In terms of biological role, usually encoded in the trnK tRNA gene intron. Probably assists in splicing its own and other chloroplast group II introns. The chain is Maturase K from Otacanthus azureus (Brazilian snapdragon).